A 137-amino-acid chain; its full sequence is MRNFDLSPLYRSAIGFDRLFNALEAGQSQGNGGYPPYNVELVDENHYRIAIAVAGFAEQELEITTQDNLLIVRGAHNNEPAERTYLYQGIAERNFERKFQLAEHIQIKGAKLENGLLYIDMERIVPETLKPRRIEIK.

The region spanning 28–137 (SQGNGGYPPY…TLKPRRIEIK (110 aa)) is the sHSP domain.

This sequence belongs to the small heat shock protein (HSP20) family. As to quaternary structure, monomer. Forms homomultimers of about 100-150 subunits at optimal growth temperatures. Conformation changes to monomers at high temperatures or high ionic concentrations.

The protein resides in the cytoplasm. Functionally, associates with aggregated proteins, together with IbpB, to stabilize and protect them from irreversible denaturation and extensive proteolysis during heat shock and oxidative stress. Aggregated proteins bound to the IbpAB complex are more efficiently refolded and reactivated by the ATP-dependent chaperone systems ClpB and DnaK/DnaJ/GrpE. Its activity is ATP-independent. In Serratia proteamaculans (strain 568), this protein is Small heat shock protein IbpA.